A 399-amino-acid polypeptide reads, in one-letter code: Elongation factor Tu (399 aa).

The tr-type G domain occupies 10–209 (KPHVNIGTIG…EVDAYIPTPE (200 aa)). Residues 19–26 (GHVDHGKT) form a G1 region. 19–26 (GHVDHGKT) lines the GTP pocket. Residue Thr-26 participates in Mg(2+) binding. Residues 60–64 (GITIA) are G2. The interval 81 to 84 (DCPG) is G3. GTP contacts are provided by residues 81–85 (DCPGH) and 136–139 (NKQD). The tract at residues 136–139 (NKQD) is G4. The segment at 174 to 176 (SAL) is G5.

This sequence belongs to the TRAFAC class translation factor GTPase superfamily. Classic translation factor GTPase family. EF-Tu/EF-1A subfamily. In terms of assembly, monomer.

It localises to the cytoplasm. It carries out the reaction GTP + H2O = GDP + phosphate + H(+). Functionally, GTP hydrolase that promotes the GTP-dependent binding of aminoacyl-tRNA to the A-site of ribosomes during protein biosynthesis. This is Elongation factor Tu from Helicobacter pylori (strain Shi470).